Consider the following 666-residue polypeptide: Translation factor guf1, mitochondrial (666 aa).

A mitochondrion-targeting transit peptide spans 1 to 43 (MRGCLQLARWLRAAPKCPAASLLKPPSGLANPARFFTTSTACW). Residues 68–248 (DRYRNFCIVA…TVVEKIPAPV (181 aa)) enclose the tr-type G domain. GTP is bound by residues 77 to 84 (AHVDHGKS), 141 to 145 (DTPGH), and 195 to 198 (NKVD).

Belongs to the TRAFAC class translation factor GTPase superfamily. Classic translation factor GTPase family. LepA subfamily.

It localises to the mitochondrion inner membrane. It catalyses the reaction GTP + H2O = GDP + phosphate + H(+). Its function is as follows. Promotes mitochondrial protein synthesis. May act as a fidelity factor of the translation reaction, by catalyzing a one-codon backward translocation of tRNAs on improperly translocated ribosomes. Binds to mitochondrial ribosomes in a GTP-dependent manner. The protein is Translation factor guf1, mitochondrial (guf1) of Aspergillus niger (strain ATCC MYA-4892 / CBS 513.88 / FGSC A1513).